The chain runs to 338 residues: Inositol 2-dehydrogenase 3 (338 aa).

The protein belongs to the Gfo/Idh/MocA family. In terms of assembly, homotetramer.

It catalyses the reaction myo-inositol + NAD(+) = scyllo-inosose + NADH + H(+). Functionally, involved in the oxidation of myo-inositol (MI) to 2-keto-myo-inositol (2KMI or 2-inosose). This chain is Inositol 2-dehydrogenase 3, found in Saccharopolyspora erythraea (strain ATCC 11635 / DSM 40517 / JCM 4748 / NBRC 13426 / NCIMB 8594 / NRRL 2338).